We begin with the raw amino-acid sequence, 419 residues long: O-methyltransferase gsfB (419 aa).

Residues 255-256, Asp278, 300-301, and Arg316 contribute to the S-adenosyl-L-methionine site; these read GG and DF. The active-site Proton acceptor is the His320.

The protein belongs to the class I-like SAM-binding methyltransferase superfamily. Cation-independent O-methyltransferase family.

It catalyses the reaction 2-(2,4-dihydroxy-6-oxidobenzoyl)-5-hydroxy-3-methylbenzenolate + S-adenosyl-L-methionine = griseophenone D + S-adenosyl-L-homocysteine + H(+). The protein operates within secondary metabolite biosynthesis; terpenoid biosynthesis. Functionally, O-methyltransferase; part of the gene cluster that mediates the biosynthesis of griseofulvin, an important antifungal drug that has been in use for a long time for treating dermatophyte infections. The first step of the pathway is the formation of the heptaketide backbone by gsfA which is initiated by priming with acetyl-CoA, followed by sequential condensations of 6 malonyl-CoA units. The resulting benzophenone can undergo a spontaneous dehydration to form norlichexanthone. However, the true precursor for the griseofulvin biosynthesis is not norlichexanthone, but the heptaketide benzophenone that is O-methylated at 3-OH by gsfB to produce griseophenone D which is further methylated at 9-OH by gsfC to yield griseophenone C. Griseophenone C is then substrate of halogenase gsfI which is responsible for the regio-specific chlorination at the C13 position to form griseophenone B. The cytochrome P450 gsfF catalyzes the coupling of orcinol and phloroglucinol rings in griseophenone B to form desmethyl-dehydrogriseofulvin A which is further methylated at 5-OH by gsfD to yield dehydrogriseofulvin. Finally, gsfE performs stereospecific reduction of enone 18 of dehydrogriseofulvin to afford the final product griseofulvin. The sequence is that of O-methyltransferase gsfB from Penicillium aethiopicum.